The chain runs to 72 residues: Translational regulator CsrA (72 aa).

Belongs to the CsrA/RsmA family. Homodimer; the beta-strands of each monomer intercalate to form a hydrophobic core, while the alpha-helices form wings that extend away from the core.

The protein localises to the cytoplasm. A translational regulator that binds mRNA to regulate translation initiation and/or mRNA stability. Usually binds in the 5'-UTR at or near the Shine-Dalgarno sequence preventing ribosome-binding, thus repressing translation. Its main target seems to be the major flagellin gene, while its function is anatagonized by FliW. This is Translational regulator CsrA from Clostridium botulinum (strain Loch Maree / Type A3).